The following is a 345-amino-acid chain: Dihydroorotate dehydrogenase (quinone) (345 aa).

Residues 65-69 and threonine 89 contribute to the FMN site; that span reads AGLDK. Lysine 69 provides a ligand contact to substrate. A substrate-binding site is contributed by 114 to 118; it reads NRMGF. Asparagine 142 and asparagine 175 together coordinate FMN. Asparagine 175 is a substrate binding site. Residue serine 178 is the Nucleophile of the active site. Asparagine 180 contacts substrate. The FMN site is built by lysine 220 and threonine 248. 249 to 250 lines the substrate pocket; it reads NT. FMN is bound by residues glycine 271, glycine 300, and 321-322; that span reads YT.

It belongs to the dihydroorotate dehydrogenase family. Type 2 subfamily. In terms of assembly, monomer. The cofactor is FMN.

Its subcellular location is the cell membrane. It carries out the reaction (S)-dihydroorotate + a quinone = orotate + a quinol. It functions in the pathway pyrimidine metabolism; UMP biosynthesis via de novo pathway; orotate from (S)-dihydroorotate (quinone route): step 1/1. Catalyzes the conversion of dihydroorotate to orotate with quinone as electron acceptor. This is Dihydroorotate dehydrogenase (quinone) from Burkholderia lata (strain ATCC 17760 / DSM 23089 / LMG 22485 / NCIMB 9086 / R18194 / 383).